The following is a 303-amino-acid chain: Phytochrome-associated serine/threonine-protein phosphatase 3 (303 aa).

Zn(2+) contacts are provided by D50, H52, D78, and N110. H111 acts as the Proton donor in catalysis. Zn(2+)-binding residues include H160 and H234.

Belongs to the PPP phosphatase family. PP-6 (PP-V) subfamily. In terms of assembly, interacts with PHYA and PHYB, mostly when they are phosphorylated and in Pfr forms. Interacts with TAP46. Interacts with NRP. Interacts with PIN1 and PIN2. Interacts with ABI5. Interacts with PIF3 and PIF4. Protein phosphatase 6 (PP6) holoenzyme is a heterotrimeric complex formed by the catalytic subunit FYPP, a SAPS domain-containing subunit (SAL) and a protein phosphatase 2A regulatory subunit A (PP2AA). Zn(2+) is required as a cofactor. In terms of tissue distribution, mostly expressed in flowers. Also detected to a lower extent in stems and leaves. Expressed in roots.

The protein resides in the cytoplasm. It carries out the reaction O-phospho-L-seryl-[protein] + H2O = L-seryl-[protein] + phosphate. The enzyme catalyses O-phospho-L-threonyl-[protein] + H2O = L-threonyl-[protein] + phosphate. In terms of biological role, catalytic subunit of protein phosphatase 6 (PP6). Dephosphorylates phosphorylated phytochromes, with a preference toward Pfr forms. Plays a major role in the photoperiodic control of flowering time in long days by modulating phytochrome signals in flowering time control. Involved in the regulation of polar auxin transport in roots. Dephosphorylates directly the auxin efflux carriers PIN1 and PIN2, thus promoting their proper polar localization in root cell plasma membrane. Acts antagonistically with the protein kinase PID to regulate the reversible phosphorylation of PIN and polar targeting, subsequently impacting polar auxin transport and plant development. Involved in the regulation of abscisic acid (ABA) signaling during seed germination and postgermination seedling growth. Functions as a negative regulator of ABA signaling through direct dephosphorylation and destabilization of ABI5 protein. Acts antagonistically with the protein kinase SRK2E/SNRK2.6 to regulate ABI5 phosphorylation and ABA responses. Involved in the regulation of phosphorylation status in hypocotyl phototropism. Involved in the negative regulation of photomorphogenesis by controlling the stability and transcriptional activity of PIF3 and PIF4 proteins in the dark, via the regulation of their phosphorylation status. This chain is Phytochrome-associated serine/threonine-protein phosphatase 3, found in Arabidopsis thaliana (Mouse-ear cress).